The chain runs to 95 residues: Histone-like DNA-binding protein (95 aa).

It belongs to the bacterial histone-like protein family.

This chain is Histone-like DNA-binding protein, found in Rickettsia conorii (strain ATCC VR-613 / Malish 7).